Reading from the N-terminus, the 571-residue chain is uncharacterized protein (571 aa).

The next 11 helical transmembrane spans lie at 5–27 (VILN…GYLV), 34–56 (TFVL…LNIT), 61–79 (IGSL…QGGA), 92–114 (LLAS…AWIF), 161–183 (TVGY…ATIF), 391–408 (FIFF…GLIS), 412–434 (FGIS…FGWI), 455–474 (LGLA…QAIT), 484–506 (FFLG…YYLL), 513–532 (VLLA…AALL), and 547–569 (SYAL…VTII).

Belongs to the AAE transporter (TC 2.A.81) family.

The protein resides in the cell membrane. This is an uncharacterized protein from Francisella tularensis subsp. tularensis (strain SCHU S4 / Schu 4).